Consider the following 379-residue polypeptide: Queuine tRNA-ribosyltransferase (379 aa).

Asp89 serves as the catalytic Proton acceptor. Residues 89–93, Asp143, Gln187, and Gly214 each bind substrate; that span reads DSGGF. Positions 245-251 are RNA binding; it reads GVGKPED. Asp264 functions as the Nucleophile in the catalytic mechanism. The RNA binding; important for wobble base 34 recognition stretch occupies residues 269–273; it reads TRNAR. Zn(2+)-binding residues include Cys302, Cys304, Cys307, and His333.

Belongs to the queuine tRNA-ribosyltransferase family. Homodimer. Within each dimer, one monomer is responsible for RNA recognition and catalysis, while the other monomer binds to the replacement base PreQ1. Requires Zn(2+) as cofactor.

It catalyses the reaction 7-aminomethyl-7-carbaguanine + guanosine(34) in tRNA = 7-aminomethyl-7-carbaguanosine(34) in tRNA + guanine. The protein operates within tRNA modification; tRNA-queuosine biosynthesis. Functionally, catalyzes the base-exchange of a guanine (G) residue with the queuine precursor 7-aminomethyl-7-deazaguanine (PreQ1) at position 34 (anticodon wobble position) in tRNAs with GU(N) anticodons (tRNA-Asp, -Asn, -His and -Tyr). Catalysis occurs through a double-displacement mechanism. The nucleophile active site attacks the C1' of nucleotide 34 to detach the guanine base from the RNA, forming a covalent enzyme-RNA intermediate. The proton acceptor active site deprotonates the incoming PreQ1, allowing a nucleophilic attack on the C1' of the ribose to form the product. After dissociation, two additional enzymatic reactions on the tRNA convert PreQ1 to queuine (Q), resulting in the hypermodified nucleoside queuosine (7-(((4,5-cis-dihydroxy-2-cyclopenten-1-yl)amino)methyl)-7-deazaguanosine). The polypeptide is Queuine tRNA-ribosyltransferase (Edwardsiella ictaluri (strain 93-146)).